Consider the following 446-residue polypeptide: Histidine--tRNA ligase (446 aa).

This sequence belongs to the class-II aminoacyl-tRNA synthetase family. In terms of assembly, homodimer.

It is found in the cytoplasm. It carries out the reaction tRNA(His) + L-histidine + ATP = L-histidyl-tRNA(His) + AMP + diphosphate + H(+). This Burkholderia lata (strain ATCC 17760 / DSM 23089 / LMG 22485 / NCIMB 9086 / R18194 / 383) protein is Histidine--tRNA ligase.